The primary structure comprises 274 residues: Putative 2-succinyl-6-hydroxy-2,4-cyclohexadiene-1-carboxylate synthase (274 aa).

The AB hydrolase-1 domain occupies 26–259 (AVVCLHGFTG…KAGHTVHVEQ (234 aa)).

It belongs to the AB hydrolase superfamily. MenH family. As to quaternary structure, monomer.

The enzyme catalyses 5-enolpyruvoyl-6-hydroxy-2-succinyl-cyclohex-3-ene-1-carboxylate = (1R,6R)-6-hydroxy-2-succinyl-cyclohexa-2,4-diene-1-carboxylate + pyruvate. Its pathway is quinol/quinone metabolism; 1,4-dihydroxy-2-naphthoate biosynthesis; 1,4-dihydroxy-2-naphthoate from chorismate: step 3/7. It functions in the pathway quinol/quinone metabolism; menaquinone biosynthesis. Its function is as follows. Catalyzes a proton abstraction reaction that results in 2,5-elimination of pyruvate from 2-succinyl-5-enolpyruvyl-6-hydroxy-3-cyclohexene-1-carboxylate (SEPHCHC) and the formation of 2-succinyl-6-hydroxy-2,4-cyclohexadiene-1-carboxylate (SHCHC). The protein is Putative 2-succinyl-6-hydroxy-2,4-cyclohexadiene-1-carboxylate synthase of Bacillus subtilis (strain 168).